A 206-amino-acid chain; its full sequence is LexA repressor (206 aa).

Residues 27–47 (YEEIRQNLGFRSLNAVFKHLK) constitute a DNA-binding region (H-T-H motif). Residues Ser-120 and Lys-157 each act as for autocatalytic cleavage activity in the active site.

Belongs to the peptidase S24 family. In terms of assembly, homodimer.

The enzyme catalyses Hydrolysis of Ala-|-Gly bond in repressor LexA.. In terms of biological role, represses a number of genes involved in the response to DNA damage (SOS response), including recA and lexA. In the presence of single-stranded DNA, RecA interacts with LexA causing an autocatalytic cleavage which disrupts the DNA-binding part of LexA, leading to derepression of the SOS regulon and eventually DNA repair. The protein is LexA repressor of Syntrophobacter fumaroxidans (strain DSM 10017 / MPOB).